Consider the following 361-residue polypeptide: Tyrosine--tRNA ligase (361 aa).

Residues Tyr36, Tyr162, Gln166, Asp169, and Gln184 each contribute to the L-tyrosine site. The 'KMSKS' region signature appears at 236-240; the sequence is KMSKS. Residue Lys239 coordinates ATP.

It belongs to the class-I aminoacyl-tRNA synthetase family. TyrS type 4 subfamily. In terms of assembly, homodimer.

The protein localises to the cytoplasm. It carries out the reaction tRNA(Tyr) + L-tyrosine + ATP = L-tyrosyl-tRNA(Tyr) + AMP + diphosphate + H(+). Its function is as follows. Catalyzes the attachment of tyrosine to tRNA(Tyr) in a two-step reaction: tyrosine is first activated by ATP to form Tyr-AMP and then transferred to the acceptor end of tRNA(Tyr). In Saccharolobus islandicus (strain Y.N.15.51 / Yellowstone #2) (Sulfolobus islandicus), this protein is Tyrosine--tRNA ligase.